The sequence spans 95 residues: Small integral membrane protein 26 (95 aa).

Residues 13–35 (MSVVYGIGTWSVLGSLLYYSRTM) traverse the membrane as a helical segment.

This sequence belongs to the SMIM26 family. In terms of assembly, interacts with AGK and SLC25A11. As to expression, detected in kidney (at protein level).

Its subcellular location is the mitochondrion outer membrane. May play a role in cell viability. The protein is Small integral membrane protein 26 of Homo sapiens (Human).